The following is a 233-amino-acid chain: MWSGLLPPGLNESDVELNSDDDTTLESSELNLQEGKEDGTFEKTEMVDIPTDGPSTEAEANINAYEECPSGIPLNMWNKFQELHKKHSEQKTSASRSEKKKRKRSRKGKLKNEEESHSEQSSSETQWKELTQYFGVNERFDPPVKRKKVEKSGLEKRIDQAVEEWNIEKAEELSNQLATRELGVKIAKAIACHNFVKAKKEAENSQVARKKKKLAWGFEAKKRWETKSNMGYM.

Disordered stretches follow at residues 1-57 and 79-127; these read MWSG…PSTE and KFQE…ETQW. Over residues 13–24 the composition is skewed to acidic residues; sequence SDVELNSDDDTT. Positions 34 to 46 are enriched in basic and acidic residues; the sequence is EGKEDGTFEKTEM. The segment covering 98-109 has biased composition (basic residues); sequence EKKKRKRSRKGK. Residues 144-164 adopt a coiled-coil conformation; sequence VKRKKVEKSGLEKRIDQAVEE.

The polypeptide is Protein FAM204A (FAM204A) (Bos taurus (Bovine)).